The following is a 429-amino-acid chain: L-threonine dehydratase biosynthetic IlvA (429 aa).

At K66 the chain carries N6-(pyridoxal phosphate)lysine. Residues N93, G196–C200, and S322 each bind pyridoxal 5'-phosphate. Positions H346–P420 constitute an ACT-like domain.

This sequence belongs to the serine/threonine dehydratase family. As to quaternary structure, homotetramer. Pyridoxal 5'-phosphate serves as cofactor.

It catalyses the reaction L-threonine = 2-oxobutanoate + NH4(+). Its pathway is amino-acid biosynthesis; L-isoleucine biosynthesis; 2-oxobutanoate from L-threonine: step 1/1. Its function is as follows. Catalyzes the anaerobic formation of alpha-ketobutyrate and ammonia from threonine in a two-step reaction. The first step involved a dehydration of threonine and a production of enamine intermediates (aminocrotonate), which tautomerizes to its imine form (iminobutyrate). Both intermediates are unstable and short-lived. The second step is the nonenzymatic hydrolysis of the enamine/imine intermediates to form 2-ketobutyrate and free ammonia. In the low water environment of the cell, the second step is accelerated by RidA. The sequence is that of L-threonine dehydratase biosynthetic IlvA (ilvA) from Mycobacterium bovis (strain ATCC BAA-935 / AF2122/97).